The primary structure comprises 93 residues: Large ribosomal subunit protein eL29 (93 aa).

Positions 1–31 (MAKSKNHSTHHKNRKDHRNGIKKAVVHKKTS) are enriched in basic residues. The interval 1-33 (MAKSKNHSTHHKNRKDHRNGIKKAVVHKKTSSK) is disordered.

It belongs to the eukaryotic ribosomal protein eL29 family.

The polypeptide is Large ribosomal subunit protein eL29 (rpl29) (Dictyostelium discoideum (Social amoeba)).